Reading from the N-terminus, the 208-residue chain is Protein-L-isoaspartate O-methyltransferase (208 aa).

The active site involves S59.

This sequence belongs to the methyltransferase superfamily. L-isoaspartyl/D-aspartyl protein methyltransferase family.

It is found in the cytoplasm. The catalysed reaction is [protein]-L-isoaspartate + S-adenosyl-L-methionine = [protein]-L-isoaspartate alpha-methyl ester + S-adenosyl-L-homocysteine. In terms of biological role, catalyzes the methyl esterification of L-isoaspartyl residues in peptides and proteins that result from spontaneous decomposition of normal L-aspartyl and L-asparaginyl residues. It plays a role in the repair and/or degradation of damaged proteins. This is Protein-L-isoaspartate O-methyltransferase from Vibrio vulnificus (strain CMCP6).